The primary structure comprises 99 residues: UPF0122 protein UU142 (99 aa).

The protein belongs to the UPF0122 family.

In terms of biological role, might take part in the signal recognition particle (SRP) pathway. This is inferred from the conservation of its genetic proximity to ftsY/ffh. May be a regulatory protein. The chain is UPF0122 protein UU142 from Ureaplasma parvum serovar 3 (strain ATCC 700970).